A 188-amino-acid chain; its full sequence is Putative 3-methyladenine DNA glycosylase (188 aa).

The protein belongs to the DNA glycosylase MPG family.

The chain is Putative 3-methyladenine DNA glycosylase from Ehrlichia ruminantium (strain Gardel).